A 76-amino-acid chain; its full sequence is uncharacterized protein (76 aa).

The next 2 helical transmembrane spans lie at F16 to L33 and T45 to A61.

It is found in the cell membrane. This is an uncharacterized protein from Bacillus subtilis (strain 168).